The following is a 447-amino-acid chain: Putative branched-chain amino acid carrier protein SERP0977 (447 aa).

The next 12 helical transmembrane spans lie at 5 to 25 (TWII…LIFP), 40 to 60 (ILAF…VGAL), 74 to 94 (PRFS…LFAI), 114 to 134 (GNLA…YLCL), 143 to 163 (IGSL…IKGF), 193 to 213 (GYLT…VNAI), 229 to 249 (IIAG…LGYI), 290 to 310 (LLGI…IVSV), 317 to 337 (IIPK…SFIL), 350 to 370 (VPVL…ILIA), 382 to 402 (IPLI…QGWI), and 417 to 437 (LEWF…SYFV).

This sequence belongs to the branched chain amino acid transporter family.

Its subcellular location is the cell membrane. In terms of biological role, component of the transport system for branched-chain amino acids (leucine, isoleucine and valine), which is coupled to a proton motive force. The protein is Putative branched-chain amino acid carrier protein SERP0977 of Staphylococcus epidermidis (strain ATCC 35984 / DSM 28319 / BCRC 17069 / CCUG 31568 / BM 3577 / RP62A).